Here is a 590-residue protein sequence, read N- to C-terminus: UvrABC system protein C (590 aa).

The region spanning glutamate 11–valine 85 is the GIY-YIG domain. The UVR domain occupies aspartate 194 to phenylalanine 229.

This sequence belongs to the UvrC family. In terms of assembly, interacts with UvrB in an incision complex.

It is found in the cytoplasm. In terms of biological role, the UvrABC repair system catalyzes the recognition and processing of DNA lesions. UvrC both incises the 5' and 3' sides of the lesion. The N-terminal half is responsible for the 3' incision and the C-terminal half is responsible for the 5' incision. The polypeptide is UvrABC system protein C (Thermus thermophilus (strain ATCC 27634 / DSM 579 / HB8)).